A 433-amino-acid chain; its full sequence is Apolipoprotein B (433 aa).

N158 carries N-linked (GlcNAc...) asparagine glycosylation.

The protein resides in the cytoplasm. It is found in the secreted. Its subcellular location is the lipid droplet. Functionally, apolipoprotein B is a major protein constituent of chylomicrons, VLDL and LDL. It functions as a recognition signal for the cellular binding and internalization of LDL particles by the apoB/E receptor. In Gallus gallus (Chicken), this protein is Apolipoprotein B (APOB).